The sequence spans 401 residues: Nicotinate phosphoribosyltransferase (401 aa).

His221 is modified (phosphohistidine; by autocatalysis).

It belongs to the NAPRTase family. In terms of processing, transiently phosphorylated on a His residue during the reaction cycle. Phosphorylation strongly increases the affinity for substrates and increases the rate of nicotinate D-ribonucleotide production. Dephosphorylation regenerates the low-affinity form of the enzyme, leading to product release.

The catalysed reaction is nicotinate + 5-phospho-alpha-D-ribose 1-diphosphate + ATP + H2O = nicotinate beta-D-ribonucleotide + ADP + phosphate + diphosphate. Its pathway is cofactor biosynthesis; NAD(+) biosynthesis; nicotinate D-ribonucleotide from nicotinate: step 1/1. Functionally, catalyzes the synthesis of beta-nicotinate D-ribonucleotide from nicotinate and 5-phospho-D-ribose 1-phosphate at the expense of ATP. The polypeptide is Nicotinate phosphoribosyltransferase (Pectobacterium carotovorum subsp. carotovorum (strain PC1)).